Here is a 43-residue protein sequence, read N- to C-terminus: Potassium channel toxin gamma-KTx 4.3 (43 aa).

Disulfide bonds link C5/C23, C11/C34, C20/C39, and C24/C41.

This sequence belongs to the ergtoxin family. Gamma-KTx 4 subfamily. As to expression, expressed by the venom gland.

The protein resides in the secreted. Its function is as follows. Reversibly blocks Kv11/ERG potassium channels. The sequence is that of Potassium channel toxin gamma-KTx 4.3 from Centruroides exilicauda (Bark scorpion).